Here is a 317-residue protein sequence, read N- to C-terminus: Metaxin-1 (317 aa).

Residues lysine 38, lysine 41, and lysine 78 each participate in a glycyl lysine isopeptide (Lys-Gly) (interchain with G-Cter in ubiquitin) cross-link. Residues 164–184 traverse the membrane as a helical segment; that stretch reads EELEKELYREARECLTLLSQR.

It belongs to the metaxin family. In terms of assembly, interacts with MTX2/metaxin-2. Associates with the mitochondrial contact site and cristae organizing system (MICOS) complex, composed of at least MICOS10/MIC10, CHCHD3/MIC19, CHCHD6/MIC25, APOOL/MIC27, IMMT/MIC60, APOO/MIC23/MIC26 and QIL1/MIC13. This complex was also known under the names MINOS or MitOS complex. The MICOS complex associates with mitochondrial outer membrane proteins SAMM50, MTX1 and MTX2 (together described as components of the mitochondrial outer membrane sorting assembly machinery (SAM) complex) and DNAJC11, mitochondrial inner membrane protein TMEM11 and with HSPA9. The MICOS and SAM complexes together with DNAJC11 are part of a large protein complex spanning both membranes termed the mitochondrial intermembrane space bridging (MIB) complex. Interacts with ARMC1. Ubiquitinated by PRKN during mitophagy, leading to its degradation and enhancement of mitophagy. Deubiquitinated by USP30.

The protein localises to the mitochondrion outer membrane. Its function is as follows. Involved in transport of proteins into the mitochondrion. Essential for embryonic development. The polypeptide is Metaxin-1 (MTX1) (Macaca fascicularis (Crab-eating macaque)).